The following is a 464-amino-acid chain: MEFLPLFHNLRGSRVLVVGGGEIALRKSRLIADAGAVLRVVAPEIEAQLSELVVQSGGEMILRGYSECDLDGCVLIIAATDDEPLNAQVSRDARLRCVPVNVVDAPALCTVIFPAIVDRSPLVIAVSSGGDAPVLARLIRAKLETWIPSSYGQLAGLAARFRNQVKGLFPNVQQRRAFWEEVFQGAIADRQLAGQGAEAERMLIAKIAGEPPPETGEVYLVGAGPGDPDLLTFRALRLMQQADVVLYDRLVAPTILDLCRRDAERVYVGKRRAEHAVPQEQINQQLVALAKQGKRVVRLKGGDPFIFGRGGEEIEELAAHGIPFQVVPGITAASGCAAYAGIPLTHRDHAQSVRFITGHLKNGTTDLPWSDLVAPAQTLVFYMGLIGLPVICEQLIRHGRSADTPAALVEQGTTVNQRVFTGTLANLPQLVAEHDVHAPTLVIIGEVVKLREKLAWFEGAQATL.

The precorrin-2 dehydrogenase /sirohydrochlorin ferrochelatase stretch occupies residues 1–203 (MEFLPLFHNL…GQGAEAERML (203 aa)). NAD(+) contacts are provided by residues 22 to 23 (EI) and 43 to 44 (PE). The residue at position 128 (Ser-128) is a Phosphoserine. Positions 216 to 464 (GEVYLVGAGP…AWFEGAQATL (249 aa)) are uroporphyrinogen-III C-methyltransferase. Pro-225 provides a ligand contact to S-adenosyl-L-methionine. Asp-248 acts as the Proton acceptor in catalysis. Lys-270 (proton donor) is an active-site residue. Residues 301-303 (GGD), Ile-306, 331-332 (TA), Met-383, and Gly-412 each bind S-adenosyl-L-methionine.

The protein in the N-terminal section; belongs to the precorrin-2 dehydrogenase / sirohydrochlorin ferrochelatase family. This sequence in the C-terminal section; belongs to the precorrin methyltransferase family.

It carries out the reaction uroporphyrinogen III + 2 S-adenosyl-L-methionine = precorrin-2 + 2 S-adenosyl-L-homocysteine + H(+). It catalyses the reaction precorrin-2 + NAD(+) = sirohydrochlorin + NADH + 2 H(+). The enzyme catalyses siroheme + 2 H(+) = sirohydrochlorin + Fe(2+). Its pathway is cofactor biosynthesis; adenosylcobalamin biosynthesis; precorrin-2 from uroporphyrinogen III: step 1/1. The protein operates within cofactor biosynthesis; adenosylcobalamin biosynthesis; sirohydrochlorin from precorrin-2: step 1/1. It participates in porphyrin-containing compound metabolism; siroheme biosynthesis; precorrin-2 from uroporphyrinogen III: step 1/1. It functions in the pathway porphyrin-containing compound metabolism; siroheme biosynthesis; siroheme from sirohydrochlorin: step 1/1. Its pathway is porphyrin-containing compound metabolism; siroheme biosynthesis; sirohydrochlorin from precorrin-2: step 1/1. Its function is as follows. Multifunctional enzyme that catalyzes the SAM-dependent methylations of uroporphyrinogen III at position C-2 and C-7 to form precorrin-2 via precorrin-1. Then it catalyzes the NAD-dependent ring dehydrogenation of precorrin-2 to yield sirohydrochlorin. Finally, it catalyzes the ferrochelation of sirohydrochlorin to yield siroheme. The polypeptide is Siroheme synthase (Pseudomonas syringae pv. syringae (strain B728a)).